A 112-amino-acid polypeptide reads, in one-letter code: UPF0060 membrane protein Mpe_A1656 (112 aa).

The next 4 membrane-spanning stretches (helical) occupy residues glycine 9–leucine 29, serine 34–leucine 54, alanine 65–valine 85, and leucine 91–alanine 111.

Belongs to the UPF0060 family.

It is found in the cell inner membrane. The protein is UPF0060 membrane protein Mpe_A1656 of Methylibium petroleiphilum (strain ATCC BAA-1232 / LMG 22953 / PM1).